The chain runs to 888 residues: Lon protease homolog 2, peroxisomal (888 aa).

Residues 11–255 (LAILPFRNKV…KATELVDRHL (245 aa)) enclose the Lon N-terminal domain. Position 408-415 (408-415 (GPPGVGKT)) interacts with ATP. The Lon proteolytic domain occupies 692-877 (VASAGVSVGL…EDVLENAFEG (186 aa)). Residues S783 and K826 contribute to the active site. A Microbody targeting signal motif is present at residues 886–888 (SKL).

Belongs to the peptidase S16 family.

The protein localises to the peroxisome matrix. It carries out the reaction Hydrolysis of proteins in presence of ATP.. Functionally, ATP-dependent serine protease that mediates the selective degradation of misfolded and unassembled polypeptides in the peroxisomal matrix. Necessary for type 2 peroxisome targeting signal (PTS2)-containing protein processing and facilitates peroxisome matrix protein import. The sequence is that of Lon protease homolog 2, peroxisomal (LON2) from Arabidopsis thaliana (Mouse-ear cress).